Reading from the N-terminus, the 207-residue chain is Large ribosomal subunit protein uL4 (207 aa).

It belongs to the universal ribosomal protein uL4 family. Part of the 50S ribosomal subunit.

Functionally, one of the primary rRNA binding proteins, this protein initially binds near the 5'-end of the 23S rRNA. It is important during the early stages of 50S assembly. It makes multiple contacts with different domains of the 23S rRNA in the assembled 50S subunit and ribosome. Forms part of the polypeptide exit tunnel. The chain is Large ribosomal subunit protein uL4 from Rickettsia peacockii (strain Rustic).